Consider the following 314-residue polypeptide: DNA-directed RNA polymerase subunit alpha (314 aa).

The tract at residues 1–229 is alpha N-terminal domain (alpha-NTD); that stretch reads MLESKLKAPV…EHLNYFANPE (229 aa). The alpha C-terminal domain (alpha-CTD) stretch occupies residues 246-314; sequence SAEEDLDLPL…LAKKGFTLKE (69 aa).

This sequence belongs to the RNA polymerase alpha chain family. Homodimer. The RNAP catalytic core consists of 2 alpha, 1 beta, 1 beta' and 1 omega subunit. When a sigma factor is associated with the core the holoenzyme is formed, which can initiate transcription.

It catalyses the reaction RNA(n) + a ribonucleoside 5'-triphosphate = RNA(n+1) + diphosphate. In terms of biological role, DNA-dependent RNA polymerase catalyzes the transcription of DNA into RNA using the four ribonucleoside triphosphates as substrates. This is DNA-directed RNA polymerase subunit alpha (rpoA) from Thermus aquaticus.